The sequence spans 180 residues: Acireductone dioxygenase (180 aa).

Fe(2+) is bound by residues His-96, His-98, Glu-102, and His-140. Residues His-96, His-98, Glu-102, and His-140 each contribute to the Ni(2+) site.

Belongs to the acireductone dioxygenase (ARD) family. Monomer. It depends on Fe(2+) as a cofactor. The cofactor is Ni(2+).

It carries out the reaction 1,2-dihydroxy-5-(methylsulfanyl)pent-1-en-3-one + O2 = 3-(methylsulfanyl)propanoate + CO + formate + 2 H(+). It catalyses the reaction 1,2-dihydroxy-5-(methylsulfanyl)pent-1-en-3-one + O2 = 4-methylsulfanyl-2-oxobutanoate + formate + 2 H(+). It functions in the pathway amino-acid biosynthesis; L-methionine biosynthesis via salvage pathway; L-methionine from S-methyl-5-thio-alpha-D-ribose 1-phosphate: step 5/6. Catalyzes 2 different reactions between oxygen and the acireductone 1,2-dihydroxy-3-keto-5-methylthiopentene (DHK-MTPene) depending upon the metal bound in the active site. Fe-containing acireductone dioxygenase (Fe-ARD) produces formate and 2-keto-4-methylthiobutyrate (KMTB), the alpha-ketoacid precursor of methionine in the methionine recycle pathway. Ni-containing acireductone dioxygenase (Ni-ARD) produces methylthiopropionate, carbon monoxide and formate, and does not lie on the methionine recycle pathway. The sequence is that of Acireductone dioxygenase from Synechococcus sp. (strain WH7803).